Here is a 684-residue protein sequence, read N- to C-terminus: UvrABC system protein B (684 aa).

Residues 32–420 form the Helicase ATP-binding domain; the sequence is DGVLRGDRWQ…GGVVVEQLIR (389 aa). 45 to 52 provides a ligand contact to ATP; that stretch reads GVTGSGKT. Positions 98–121 match the Beta-hairpin motif; sequence YYDFYQPEAYIPSLDKYIAKDLKI. The region spanning 437 to 603 is the Helicase C-terminal domain; sequence QIDHLLARIR…SIIKSVDQVL (167 aa). In terms of domain architecture, UVR spans 643 to 678; it reads MLMVAEMNAEMQKAAEQTDYEKAAYLRDEILMLQER.

It belongs to the UvrB family. As to quaternary structure, forms a heterotetramer with UvrA during the search for lesions. Interacts with UvrC in an incision complex.

It is found in the cytoplasm. The UvrABC repair system catalyzes the recognition and processing of DNA lesions. A damage recognition complex composed of 2 UvrA and 2 UvrB subunits scans DNA for abnormalities. Upon binding of the UvrA(2)B(2) complex to a putative damaged site, the DNA wraps around one UvrB monomer. DNA wrap is dependent on ATP binding by UvrB and probably causes local melting of the DNA helix, facilitating insertion of UvrB beta-hairpin between the DNA strands. Then UvrB probes one DNA strand for the presence of a lesion. If a lesion is found the UvrA subunits dissociate and the UvrB-DNA preincision complex is formed. This complex is subsequently bound by UvrC and the second UvrB is released. If no lesion is found, the DNA wraps around the other UvrB subunit that will check the other stand for damage. The polypeptide is UvrABC system protein B (Chlorobaculum tepidum (strain ATCC 49652 / DSM 12025 / NBRC 103806 / TLS) (Chlorobium tepidum)).